The primary structure comprises 179 residues: Large ribosomal subunit protein uL5 (179 aa).

Belongs to the universal ribosomal protein uL5 family. As to quaternary structure, part of the 50S ribosomal subunit; contacts the 5S rRNA and probably tRNA. Forms a bridge to the 30S subunit in the 70S ribosome.

In terms of biological role, this is one of the proteins that bind and probably mediate the attachment of the 5S RNA into the large ribosomal subunit, where it forms part of the central protuberance. In the 70S ribosome it contacts protein S13 of the 30S subunit (bridge B1b), connecting the 2 subunits; this bridge is implicated in subunit movement. May contact the P site tRNA; the 5S rRNA and some of its associated proteins might help stabilize positioning of ribosome-bound tRNAs. In Pyrobaculum aerophilum (strain ATCC 51768 / DSM 7523 / JCM 9630 / CIP 104966 / NBRC 100827 / IM2), this protein is Large ribosomal subunit protein uL5.